The following is a 226-amino-acid chain: MKISYHGHSVVRIETNGKTILIDPFITGNTTTDLNAADVKADVILLTHGHGDHVGDTVEIAKRNNALVVATFELATYLSWQGVETFGMNIGGAREFDFGTVKFTQAFHSSGFVTEDKQIIYLGMPTGILFTAEGKTIYHAGDTGLFSDMKLIGERHSIDVAFLPIGDSFTMGPEDAAVAAEWLGAKLVVPIHYNTFPPIAQDPQQFVSLLPPGVGRALQPGESIEL.

This sequence belongs to the UPF0173 family.

This Geobacillus thermodenitrificans (strain NG80-2) protein is UPF0173 metal-dependent hydrolase GTNG_2675.